The chain runs to 335 residues: Tetraacyldisaccharide 4'-kinase (335 aa).

ATP is bound at residue 58–65 (TAGGSGKT).

Belongs to the LpxK family.

It carries out the reaction a lipid A disaccharide + ATP = a lipid IVA + ADP + H(+). It participates in glycolipid biosynthesis; lipid IV(A) biosynthesis; lipid IV(A) from (3R)-3-hydroxytetradecanoyl-[acyl-carrier-protein] and UDP-N-acetyl-alpha-D-glucosamine: step 6/6. Functionally, transfers the gamma-phosphate of ATP to the 4'-position of a tetraacyldisaccharide 1-phosphate intermediate (termed DS-1-P) to form tetraacyldisaccharide 1,4'-bis-phosphate (lipid IVA). The protein is Tetraacyldisaccharide 4'-kinase of Shewanella frigidimarina (strain NCIMB 400).